The sequence spans 451 residues: Tubulin alpha-3 chain (451 aa).

Position 11 (Gln11) interacts with GTP. Lys40 is subject to N6-acetyllysine. Residues Glu71, Ser140, Gly144, Thr145, Thr179, Asn206, and Asn228 each contribute to the GTP site. Glu71 is a binding site for Mg(2+). Residue Glu254 is part of the active site.

The protein belongs to the tubulin family. In terms of assembly, dimer of alpha and beta chains. A typical microtubule is a hollow water-filled tube with an outer diameter of 25 nm and an inner diameter of 15 nM. Alpha-beta heterodimers associate head-to-tail to form protofilaments running lengthwise along the microtubule wall with the beta-tubulin subunit facing the microtubule plus end conferring a structural polarity. Microtubules usually have 13 protofilaments but different protofilament numbers can be found in some organisms and specialized cells. Mg(2+) serves as cofactor. Post-translationally, undergoes a tyrosination/detyrosination cycle, the cyclic removal and re-addition of a C-terminal tyrosine residue by the enzymes tubulin tyrosine carboxypeptidase (TTCP) and tubulin tyrosine ligase (TTL), respectively. In terms of processing, acetylation of alpha chains at Lys-40 stabilizes microtubules and affects affinity and processivity of microtubule motors. This modification has a role in multiple cellular functions, ranging from cell motility, cell cycle progression or cell differentiation to intracellular trafficking and signaling.

It localises to the cytoplasm. Its subcellular location is the cytoskeleton. The enzyme catalyses GTP + H2O = GDP + phosphate + H(+). Tubulin is the major constituent of microtubules, a cylinder consisting of laterally associated linear protofilaments composed of alpha- and beta-tubulin heterodimers. Microtubules grow by the addition of GTP-tubulin dimers to the microtubule end, where a stabilizing cap forms. Below the cap, tubulin dimers are in GDP-bound state, owing to GTPase activity of alpha-tubulin. The polypeptide is Tubulin alpha-3 chain (Homarus americanus (American lobster)).